The primary structure comprises 197 residues: Regulator of free ubiquitin chains 1 (197 aa).

Belongs to the RFU1 family.

The protein localises to the endosome. Functionally, inhibitor of the DOA4 deubiquitinase involved in the regulation of protein degradation by the proteasome and maintenance of a normal level of free ubiquitin. This is Regulator of free ubiquitin chains 1 (RFU1) from Vanderwaltozyma polyspora (strain ATCC 22028 / DSM 70294 / BCRC 21397 / CBS 2163 / NBRC 10782 / NRRL Y-8283 / UCD 57-17) (Kluyveromyces polysporus).